A 467-amino-acid chain; its full sequence is Light-independent protochlorophyllide reductase subunit N (467 aa).

[4Fe-4S] cluster-binding residues include Cys-22, Cys-47, and Cys-107.

This sequence belongs to the BchN/ChlN family. In terms of assembly, protochlorophyllide reductase is composed of three subunits; ChlL, ChlN and ChlB. Forms a heterotetramer of two ChlB and two ChlN subunits. The cofactor is [4Fe-4S] cluster.

The protein localises to the plastid. Its subcellular location is the chloroplast. The catalysed reaction is chlorophyllide a + oxidized 2[4Fe-4S]-[ferredoxin] + 2 ADP + 2 phosphate = protochlorophyllide a + reduced 2[4Fe-4S]-[ferredoxin] + 2 ATP + 2 H2O. It participates in porphyrin-containing compound metabolism; chlorophyll biosynthesis (light-independent). Functionally, component of the dark-operative protochlorophyllide reductase (DPOR) that uses Mg-ATP and reduced ferredoxin to reduce ring D of protochlorophyllide (Pchlide) to form chlorophyllide a (Chlide). This reaction is light-independent. The NB-protein (ChlN-ChlB) is the catalytic component of the complex. The protein is Light-independent protochlorophyllide reductase subunit N of Pinus thunbergii (Japanese black pine).